The chain runs to 77 residues: Acyl carrier protein (77 aa).

In terms of domain architecture, Carrier spans 2-77 (SNIEERVRNI…SAIDYVVNNG (76 aa)). Ser-37 bears the O-(pantetheine 4'-phosphoryl)serine mark.

The protein belongs to the acyl carrier protein (ACP) family. 4'-phosphopantetheine is transferred from CoA to a specific serine of apo-ACP by AcpS. This modification is essential for activity because fatty acids are bound in thioester linkage to the sulfhydryl of the prosthetic group.

The protein resides in the cytoplasm. It functions in the pathway lipid metabolism; fatty acid biosynthesis. In terms of biological role, carrier of the growing fatty acid chain in fatty acid biosynthesis. The polypeptide is Acyl carrier protein (Psychromonas ingrahamii (strain DSM 17664 / CCUG 51855 / 37)).